We begin with the raw amino-acid sequence, 310 residues long: Ribosomal RNA small subunit methyltransferase H (310 aa).

S-adenosyl-L-methionine-binding positions include Ala33 to His35, Asp53, Phe79, Asp100, and Gln107.

This sequence belongs to the methyltransferase superfamily. RsmH family.

The protein resides in the cytoplasm. It carries out the reaction cytidine(1402) in 16S rRNA + S-adenosyl-L-methionine = N(4)-methylcytidine(1402) in 16S rRNA + S-adenosyl-L-homocysteine + H(+). In terms of biological role, specifically methylates the N4 position of cytidine in position 1402 (C1402) of 16S rRNA. This Clostridium beijerinckii (strain ATCC 51743 / NCIMB 8052) (Clostridium acetobutylicum) protein is Ribosomal RNA small subunit methyltransferase H.